The sequence spans 223 residues: Putative archaetidylserine decarboxylase proenzyme (223 aa).

Catalysis depends on Ser183, which acts as the Schiff-base intermediate with substrate; via pyruvic acid. Ser183 is subject to Pyruvic acid (Ser); by autocatalysis.

It belongs to the phosphatidylserine decarboxylase family. PSD-A subfamily. In terms of assembly, heterodimer of a large membrane-associated beta subunit and a small pyruvoyl-containing alpha subunit. Pyruvate is required as a cofactor. Post-translationally, is synthesized initially as an inactive proenzyme. Formation of the active enzyme involves a self-maturation process in which the active site pyruvoyl group is generated from an internal serine residue via an autocatalytic post-translational modification. Two non-identical subunits are generated from the proenzyme in this reaction, and the pyruvate is formed at the N-terminus of the alpha chain, which is derived from the carboxyl end of the proenzyme. The post-translation cleavage follows an unusual pathway, termed non-hydrolytic serinolysis, in which the side chain hydroxyl group of the serine supplies its oxygen atom to form the C-terminus of the beta chain, while the remainder of the serine residue undergoes an oxidative deamination to produce ammonia and the pyruvoyl prosthetic group on the alpha chain.

It is found in the cell membrane. The enzyme catalyses archaetidylserine + H(+) = archaetidylethanolamine + CO2. Catalyzes the formation of archaetidylethanolamine (PtdEtn) from archaetidylserine (PtdSer). This Methanothermobacter thermautotrophicus (strain ATCC 29096 / DSM 1053 / JCM 10044 / NBRC 100330 / Delta H) (Methanobacterium thermoautotrophicum) protein is Putative archaetidylserine decarboxylase proenzyme.